The sequence spans 200 residues: Probable GTP-binding protein EngB (200 aa).

An EngB-type G domain is found at 22–197 (NLPEYAFIGR…LDYIDSINRS (176 aa)). GTP-binding positions include 30 to 37 (GRSNVGKS), 57 to 61 (GKTLL), 75 to 78 (DLPG), 142 to 145 (TKAD), and 173 to 178 (HFVSSS). Mg(2+)-binding residues include S37 and T59.

Belongs to the TRAFAC class TrmE-Era-EngA-EngB-Septin-like GTPase superfamily. EngB GTPase family. It depends on Mg(2+) as a cofactor.

Necessary for normal cell division and for the maintenance of normal septation. This chain is Probable GTP-binding protein EngB, found in Phocaeicola vulgatus (strain ATCC 8482 / DSM 1447 / JCM 5826 / CCUG 4940 / NBRC 14291 / NCTC 11154) (Bacteroides vulgatus).